An 860-amino-acid polypeptide reads, in one-letter code: Transforming growth factor-beta receptor-associated protein 1 (860 aa).

One can recognise a CNH domain in the interval 24-297; the sequence is RVNIECVECC…HILQDFEGRV (274 aa). A CHCR repeat occupies 564–728; sequence RPLDEQQKNS…LLAIYLHAGP (165 aa).

It belongs to the TRAP1 family. Interacts with TGFBR2 and ACVR2B; in the absence of ligand stimulation. Interacts with TGFBR1, ACVRL1, BMPR1A and ACVR1B; in the absence of ligand stimulation and to a less extent. Interacts with SMAD4; the interaction seems to be mutually exclusive with the interaction of SMAD4 and phosphorylated SMAD2. May interact with ALOX5. Interacts with RAB5C. Interacts with VPS8, VPS11 and VPS16. Component of the putative class C core vacuole/endosome tethering (CORVET) complex; the core of which composed of the class C Vps proteins VPS11, VPS16, VPS18 and VPS33A, is associated with VPS8 and TGFBRAP1.

Its subcellular location is the cytoplasm. It is found in the early endosome. Its function is as follows. Plays a role in the TGF-beta/activin signaling pathway. It associates with inactive heteromeric TGF-beta and activin receptor complexes, mainly through the type II receptor, and is released upon activation of signaling. May recruit SMAD4 to the vicinity of the receptor complex and facilitate its interaction with receptor-regulated Smads, such as SMAD2. In terms of biological role, plays a role in vesicle-mediated protein trafficking of the endocytic membrane transport pathway. Believed to act as a component of the putative CORVET endosomal tethering complexes which is proposed to be involved in the Rab5-to-Rab7 endosome conversion probably implicating MON1A/B, and via binding SNAREs and SNARE complexes to mediate tethering and docking events during SNARE-mediated membrane fusion. The CORVET complex is proposed to function as a Rab5 effector to mediate early endosome fusion probably in specific endosome subpopulations. Functions predominantly in APPL1-containing endosomes and in degradative but not recycling trafficking of endocytosed cargo. This is Transforming growth factor-beta receptor-associated protein 1 (TGFBRAP1) from Homo sapiens (Human).